Reading from the N-terminus, the 467-residue chain is MREIVHIQAGQCGNQIGAKFWEVISDEHGIDPTGSYHGESDLQLERINVYYNEATGGKYVPRAVLVDLEPGTMDSVRAGPFGQIFRPDNFVFGQTGAGNNWAKGHYTEGAELIDSVLDVVRKEAESCDCLQGFQIAHSLGGGTGSGMGTLLISKIREEYPDRMMCTFSVVPSPKVSDTVVEPYNATLSVHQLVENADEVMCIDNEALYDISFRTLKLTTPTYGDLNHLVSAVMSGITCCLRFPGQLNSDLRKLAVNLIPFPRLHFFLVGFAPLTSRGSVGYRSLTVPELTQQMFDAKNMMAASDPRHGRYLTASAMFRGRMSTKEVDEQMLNVQNKNSSYFVEWIPNNIKSSVCDIPPKGLKMAVTFIGNSTAIQELFKRVSEQFTAMFRRKAFLHWYTGEGMDEMEFTEAESNMNDLVSEYQQYQDATIDDEEGGEEEEGGAEEEARQRKHYVIDYVPSVCVILIR.

GTP is bound by residues glutamine 11, glutamate 69, serine 138, glycine 142, threonine 143, glycine 144, asparagine 204, and asparagine 226. Glutamate 69 is a Mg(2+) binding site. The segment covering 429 to 444 (TIDDEEGGEEEEGGAE) has biased composition (acidic residues). A disordered region spans residues 429-448 (TIDDEEGGEEEEGGAEEEAR).

This sequence belongs to the tubulin family. As to quaternary structure, dimer of alpha and beta chains. A typical microtubule is a hollow water-filled tube with an outer diameter of 25 nm and an inner diameter of 15 nM. Alpha-beta heterodimers associate head-to-tail to form protofilaments running lengthwise along the microtubule wall with the beta-tubulin subunit facing the microtubule plus end conferring a structural polarity. Microtubules usually have 13 protofilaments but different protofilament numbers can be found in some organisms and specialized cells. The cofactor is Mg(2+).

The protein localises to the cytoplasm. It is found in the cytoskeleton. Its subcellular location is the spindle. The protein resides in the nucleus. Tubulin is the major constituent of microtubules, a cylinder consisting of laterally associated linear protofilaments composed of alpha- and beta-tubulin heterodimers. Microtubules grow by the addition of GTP-tubulin dimers to the microtubule end, where a stabilizing cap forms. Below the cap, tubulin dimers are in GDP-bound state, owing to GTPase activity of alpha-tubulin. This is Tubulin beta-1 chain (BETA) from Physarum polycephalum (Slime mold).